Consider the following 506-residue polypeptide: FAD-linked oxidoreductase chry5 (506 aa).

Positions 1 to 17 (MHLQALTGLATLAVTAA) are cleaved as a signal peptide. Residues 59-241 (LDKPTVNIVA…TSVTSKTYDA (183 aa)) form the FAD-binding PCMH-type domain. N-linked (GlcNAc...) asparagine glycans are attached at residues Asn205, Asn272, Asn281, Asn389, and Asn431.

The protein belongs to the oxygen-dependent FAD-linked oxidoreductase family. It depends on FAD as a cofactor.

It functions in the pathway pigment biosynthesis. Functionally, FAD-linked oxidoreductase; part of the gene cluster that mediates the biosynthesis of the yellow pigment chrysogine. Pyruvic acid and anthranilic acid are likely substrates for the nonribosomal peptide synthetase chry1/NRPS14, with pyruvic acid adenylated by the first A domain and anthranilic acid by the second. If pyruvic acid and anthranilic acid are merged and released from chry1/NRPS14 by hydrolysis, a subsequent amidation would lead to 2-pyruvoylaminobenzamide. This process is probably catalyzed by the amidotransferase chry2 using glutamine as amino donor. The dehydrogenase chry5 that has a terminal berberine bridge domain for C-N cyclization could catalyze the cyclization of 2-pyruvoylaminobenzamide to yield acetyl-4(3H)-quinazolidinone. A final reduction of acetyl-4(3H)-quinazolidinone catalyzed by the oxidoreductase chry4 would result in chrysogine. The polypeptide is FAD-linked oxidoreductase chry5 (Gibberella zeae (strain ATCC MYA-4620 / CBS 123657 / FGSC 9075 / NRRL 31084 / PH-1) (Wheat head blight fungus)).